Consider the following 398-residue polypeptide: Growth-regulating factor 3 (398 aa).

The segment covering 1-17 has biased composition (low complexity); the sequence is MDLQLKQWRSQQQQQHQ. The disordered stretch occupies residues 1 to 32; the sequence is MDLQLKQWRSQQQQQHQTESEEQPSAAKIPKH. The QLQ domain maps to 76–111; sequence FFSWAQWQELELQALIYRYMLAGAAVPQELLLPIKK. In terms of domain architecture, WRC spans 144 to 188; that stretch reads DPEPGRCRRTDGKKWRCSRDVFAGHKYCERHMHRGRNRSRKPVET. 2 consecutive short sequence motifs (bipartite nuclear localization signal) follow at residues 149–159 and 177–184; these read RCRRTDGKKWR and RGRNRSRK. Composition is skewed to polar residues over residues 299-350 and 383-398; these read SLQE…RDQQ and PTSVLHQLGVSTQAFH. A disordered region spans residues 299 to 398; that stretch reads SLQEADNSSS…QLGVSTQAFH (100 aa).

The protein belongs to the GRF family. Strongly expressed in actively growing and developing tissues, such as roots, upper stems, and shoot tips containing the shoot apical meristem (SAM) and flower buds. Also expressed in mature flowers, but weakly expressed in mature stems and leaves.

Its subcellular location is the nucleus. Transcription activator that plays a role in the regulation of cell expansion in leaf and cotyledons tissues. Component of a network formed by miR396, the GRFs and their interacting factors (GIFs) acting in the regulation of meristem function, at least partially through the control of cell proliferation. microRNA396-GRF1/GRF3 regulatory module acts as a developmental regulator in the reprogramming of root cells during cyst nematode infection, leading to the formation of the syncytium. The protein is Growth-regulating factor 3 (GRF3) of Arabidopsis thaliana (Mouse-ear cress).